Here is a 537-residue protein sequence, read N- to C-terminus: MDCKVVSLNEKDQFIPKIKSSDPVITGLFQYDAAQQTSFEKRMSKENNGREAALANVIREYMSDLKLSSEQELNIQHLANGSKVVIGGQQAGLFGGPLYIFHKIFSIITLSKELTDTHKQQVVPVFWIAGEDHDFDEVNHTFVYNENHGSLHKVKYHTMEMPETTISRYYPDKAELKQTLKTMFIHMKETVHTQGLLEICDRIIDQYDSWTDMFKALLHETFKAYGVLFIDAQFEPLRKMEAPMFKKILKKHQLLDDAFRATQQRTQNQGLKAMIQTDTNVHLFLHDENMRQLVSYDGKHFKLNKTDKTYVKEEIINIAENQPELFSNNVVTRPLMEEWLFNTVAFIGGPSEIKYWAELKDVFELFDVEMPIVMPRLRITYLNDRIEKILSKYNIPLEKVLVDGVEGERSKFIRELASHQFIEKVEGMIEQQRRLNQDLLDEVAGNQNNINLVNKNNEIHIQQYDYLLKRYLLNIERENDISMKQFREIQETLHPMGGLQERIWNPLQILNDFGTDVFKPSTYPPLSYTFDHIIIKP.

A coiled-coil region spans residues 422-450 (IEKVEGMIEQQRRLNQDLLDEVAGNQNNI).

Belongs to the BshC family.

In terms of biological role, involved in bacillithiol (BSH) biosynthesis. May catalyze the last step of the pathway, the addition of cysteine to glucosamine malate (GlcN-Mal) to generate BSH. The polypeptide is Putative cysteine ligase BshC (Staphylococcus aureus (strain bovine RF122 / ET3-1)).